The chain runs to 254 residues: Mamu class II histocompatibility antigen, DR alpha chain (254 aa).

Residues 1–25 (MAESGVPVLGFFIIAVLMSAQESWA) form the signal peptide. Residues 26–109 (IKEEHVIIQA…KRSNNTPITN (84 aa)) are alpha-1. Over 26–216 (IKEEHVIIQA…APSPLPETTE (191 aa)) the chain is Extracellular. Asn103 is a glycosylation site (N-linked (GlcNAc...) asparagine). The segment at 110 to 203 (VPPEVTVLTN…CLDAPLLKHW (94 aa)) is alpha-2. Residues 112 to 204 (PEVTVLTNSP…LDAPLLKHWE (93 aa)) form the Ig-like C1-type domain. Residues Cys132 and Cys188 are joined by a disulfide bond. Residues 204–216 (EFDAPSPLPETTE) are connecting peptide. The chain crosses the membrane as a helical span at residues 217 to 239 (NVVCALGLIVGLVGIIVGTVFII). Topologically, residues 240-254 (KGVRKSNAAERRGPL) are cytoplasmic. Lys244 participates in a covalent cross-link: Glycyl lysine isopeptide (Lys-Gly) (interchain with G-Cter in ubiquitin).

This sequence belongs to the MHC class II family. Heterodimer of an alpha chain and a beta chain.

The protein localises to the membrane. The chain is Mamu class II histocompatibility antigen, DR alpha chain (Mamu-DRA) from Macaca mulatta (Rhesus macaque).